A 64-amino-acid polypeptide reads, in one-letter code: Large ribosomal subunit protein bL35 (64 aa).

This sequence belongs to the bacterial ribosomal protein bL35 family.

This Chlorobium chlorochromatii (strain CaD3) protein is Large ribosomal subunit protein bL35.